A 180-amino-acid chain; its full sequence is MISNAIARRYAKALVQLGAEEDAVDRFGAELGQFAALLEGNADIDSVLKSPAYRIEAKREILKDVLAKLSLSGTVSNFLQVLLDRGRISFLPQIAHSYAAFADELSGVIRPVLTSAFPLEDAQVESMKGALVKATGKKVQLSVQVEPSLIGGVITKIGDKVFDGSVRTQLNRIQDILQKG.

Belongs to the ATPase delta chain family. As to quaternary structure, F-type ATPases have 2 components, F(1) - the catalytic core - and F(0) - the membrane proton channel. F(1) has five subunits: alpha(3), beta(3), gamma(1), delta(1), epsilon(1). F(0) has three main subunits: a(1), b(2) and c(10-14). The alpha and beta chains form an alternating ring which encloses part of the gamma chain. F(1) is attached to F(0) by a central stalk formed by the gamma and epsilon chains, while a peripheral stalk is formed by the delta and b chains.

Its subcellular location is the cell inner membrane. F(1)F(0) ATP synthase produces ATP from ADP in the presence of a proton or sodium gradient. F-type ATPases consist of two structural domains, F(1) containing the extramembraneous catalytic core and F(0) containing the membrane proton channel, linked together by a central stalk and a peripheral stalk. During catalysis, ATP synthesis in the catalytic domain of F(1) is coupled via a rotary mechanism of the central stalk subunits to proton translocation. Its function is as follows. This protein is part of the stalk that links CF(0) to CF(1). It either transmits conformational changes from CF(0) to CF(1) or is implicated in proton conduction. This Geobacter metallireducens (strain ATCC 53774 / DSM 7210 / GS-15) protein is ATP synthase subunit delta.